Consider the following 1133-residue polypeptide: Nuclear pore complex-interacting protein family member B5 (1133 aa).

The helical transmembrane segment at 60-84 (WLHVIIAFPTSYKVVITLWIVYLWV) threads the bilayer. Disordered regions lie at residues 241–262 (NRMG…NSLS), 290–575 (LTPL…IKTP), and 868–1133 (ERLR…RRLS). The span at 252-262 (QQHSITDNSLS) shows a compositional bias: polar residues. Pro residues predominate over residues 349–359 (PLPPSALPSAP). Basic and acidic residues-rich tracts occupy residues 406 to 416 (DNIKTPAERLR), 448 to 458 (DNIKTPAERLR), 490 to 500 (DNIKTPAERLR), 528 to 538 (DNIKTPAERLR), 903 to 913 (DNIKTPAERLR), 945 to 955 (DNIKTPAERLR), and 987 to 997 (DNIKTPAERLR).

The protein belongs to the NPIP family.

It is found in the membrane. The sequence is that of Nuclear pore complex-interacting protein family member B5 (NPIPB5) from Homo sapiens (Human).